The primary structure comprises 555 residues: MPIAGTKYAPFPAPQLDDRTWPSKRIEKAPIWCSVDLRDGNQALIDPMGHDRKERMFRLLIDMGFPEIEIGFPSASQTDFDFCRWAIEQGDVPDDVDLQVLVQCRPELITRTFEALEGAKTPIIHFYNSTSELQRRVVFAKDVGGIKQIATDAAKMIMDMAAKAGGGYRFQYSPESFTGTELDVALEICNAVIEIVKPTPDNKLIVNLPSTVEMNTPNVYADQIEWMCRNLDNRESLIISLHPHNDRGTGIAATELGLMAGADRVEGTLFGNGERTGNVDVVTLALNMYTQGIDPGLDCTDINRMKEVYEYSNQLKIAERHPYVGELVYTAFSGSHQDAINKGMKARRSANSPVWEVPYLPIDPQDVGRSYEAIIRINSQSGKGGIAYILQADYGLNLPRNLQVEFREIIQHITDEEGKELPSKRIYEEFQKLYVTQPDARIKFVDHHTYPDPEQKGRRILTAEITDNGVTKTIEGKGTGPIDGFVDALSKYLGVKMSVVDYSEHSLQQGSDASAISYVEMVYPGGKLFGVGINDNIVSASLEAVVSAANRVIAK.

The 274-residue stretch at 30–303 (PIWCSVDLRD…DPGLDCTDIN (274 aa)) folds into the Pyruvate carboxyltransferase domain. D39, H242, H244, and N278 together coordinate Mg(2+). Residues 437-555 (QPDARIKFVD…VSAANRVIAK (119 aa)) are regulatory domain.

The protein belongs to the alpha-IPM synthase/homocitrate synthase family. LeuA type 2 subfamily. Homodimer. The cofactor is Mg(2+).

The protein localises to the cytoplasm. The catalysed reaction is 3-methyl-2-oxobutanoate + acetyl-CoA + H2O = (2S)-2-isopropylmalate + CoA + H(+). It participates in amino-acid biosynthesis; L-leucine biosynthesis; L-leucine from 3-methyl-2-oxobutanoate: step 1/4. Functionally, catalyzes the condensation of the acetyl group of acetyl-CoA with 3-methyl-2-oxobutanoate (2-ketoisovalerate) to form 3-carboxy-3-hydroxy-4-methylpentanoate (2-isopropylmalate). In Brucella suis biovar 1 (strain 1330), this protein is 2-isopropylmalate synthase.